The chain runs to 1125 residues: Angiopoietin-1 receptor (1125 aa).

The first 22 residues, 1–22 (MDSLAGLVLCGVSLLLSATVDG), serve as a signal peptide directing secretion. At 23–748 (AMDLILINSL…PADLGGRKML (726 aa)) the chain is on the extracellular side. A disulfide bridge links cysteine 44 with cysteine 102. Residues 44–123 (CIASGWRPHE…RTMKMRQQAS (80 aa)) enclose the Ig-like C2-type 1 domain. An N-linked (GlcNAc...) asparagine glycan is attached at asparagine 158. 3 consecutive EGF-like domains span residues 210 to 252 (RCEA…RTCE), 254 to 299 (ACEP…LQCN), and 301 to 341 (ACQP…LQCE). Intrachain disulfides connect cysteine 211–cysteine 220, cysteine 224–cysteine 233, cysteine 227–cysteine 240, cysteine 242–cysteine 251, cysteine 255–cysteine 264, cysteine 268–cysteine 274, cysteine 280–cysteine 287, cysteine 289–cysteine 298, cysteine 302–cysteine 311, cysteine 315–cysteine 323, cysteine 317–cysteine 329, cysteine 331–cysteine 340, and cysteine 370–cysteine 424. The 91-residue stretch at 350–440 (PKIEDLPDHI…GMVEKPFNIS (91 aa)) folds into the Ig-like C2-type 2 domain. 3 consecutive Fibronectin type-III domains span residues 447 to 541 (PLNA…TASI), 545 to 637 (PPRG…TLSD), and 642 to 735 (QPEN…TLSE). The helical transmembrane segment at 749–769 (LIAILGSAGMTCLTVLLAFLI) threads the bilayer. Residues 770 to 1125 (MLQLKRANVQ…GIDCSAEEAA (356 aa)) are Cytoplasmic-facing. A Protein kinase domain is found at 825-1097 (IKFQDVIGEG…QILVSLNRML (273 aa)). ATP is bound by residues 831 to 839 (IGEGNFGQV) and lysine 856. The residue at position 861 (tyrosine 861) is a Phosphotyrosine; by autocatalysis. Aspartate 965 acts as the Proton acceptor in catalysis. Residues tyrosine 993, tyrosine 1103, and tyrosine 1109 each carry the phosphotyrosine; by autocatalysis modification.

Belongs to the protein kinase superfamily. Tyr protein kinase family. Tie subfamily. In terms of assembly, homodimer. Heterodimer with TIE1. Interacts with ANGPT1, ANGPT2 and ANGPT4. At cell-cell contacts in quiescent cells, forms a signaling complex composed of ANGPT1 plus TEK molecules from two adjoining cells. In the absence of endothelial cell-cell contacts, interaction with ANGPT1 mediates contacts with the extracellular matrix. Interacts (tyrosine phosphorylated) with TNIP2. Interacts (tyrosine phosphorylated) with SHC1 (via SH2 domain). Interacts with PTPRB; this promotes endothelial cell-cell adhesion. Interacts with DOK2, GRB2, GRB7, GRB14, PIK3R1 and PTPN11/SHP2. Colocalizes with DOK2 at contacts with the extracellular matrix in migrating cells. Post-translationally, proteolytic processing leads to the shedding of the extracellular domain (soluble TIE-2 alias sTIE-2). Autophosphorylated on tyrosine residues in response to ligand binding. Autophosphorylation occurs in trans, i.e. one subunit of the dimeric receptor phosphorylates tyrosine residues on the other subunit. Autophosphorylation occurs in a sequential manner, where Tyr-993 in the kinase activation loop is phosphorylated first, followed by autophosphorylation at Tyr-1109 and at additional tyrosine residues. ANGPT1-induced phosphorylation is impaired during hypoxia, due to increased expression of ANGPT2. Phosphorylation is important for interaction with GRB14, PIK3R1 and PTPN11. Phosphorylation at Tyr-1103 is important for interaction with GRB2 and GRB7. Phosphorylation at Tyr-1109 is important for interaction with DOK2 and for coupling to downstream signal transduction pathways in endothelial cells. Dephosphorylated by PTPRB. In terms of processing, ubiquitinated. The phosphorylated receptor is ubiquitinated and internalized, leading to its degradation. Specifically expressed in developing vascular endothelial cells.

It is found in the cell membrane. The protein localises to the cell junction. Its subcellular location is the focal adhesion. It localises to the cytoplasm. The protein resides in the cytoskeleton. It is found in the secreted. The catalysed reaction is L-tyrosyl-[protein] + ATP = O-phospho-L-tyrosyl-[protein] + ADP + H(+). Its activity is regulated as follows. Angiopoietin binding leads to receptor dimerization and activation by autophosphorylation at Tyr-993 on the kinase activation loop. Tyrosine-protein kinase that acts as a cell-surface receptor for ANGPT1, ANGPT2 and ANGPT4 and regulates angiogenesis, endothelial cell survival, proliferation, migration, adhesion and cell spreading, reorganization of the actin cytoskeleton, but also maintenance of vascular quiescence. Has anti-inflammatory effects by preventing the leakage of pro-inflammatory plasma proteins and leukocytes from blood vessels. Required for normal angiogenesis and heart development during embryogenesis. Required for post-natal hematopoiesis. After birth, activates or inhibits angiogenesis, depending on the context. Inhibits angiogenesis and promotes vascular stability in quiescent vessels, where endothelial cells have tight contacts. In quiescent vessels, ANGPT1 oligomers recruit TEK to cell-cell contacts, forming complexes with TEK molecules from adjoining cells, and this leads to preferential activation of phosphatidylinositol 3-kinase and the AKT1 signaling cascades. In migrating endothelial cells that lack cell-cell adhesions, ANGT1 recruits TEK to contacts with the extracellular matrix, leading to the formation of focal adhesion complexes, activation of PTK2/FAK and of the downstream kinases MAPK1/ERK2 and MAPK3/ERK1, and ultimately to the stimulation of sprouting angiogenesis. ANGPT1 signaling triggers receptor dimerization and autophosphorylation at specific tyrosine residues that then serve as binding sites for scaffold proteins and effectors. Signaling is modulated by ANGPT2 that has lower affinity for TEK, can promote TEK autophosphorylation in the absence of ANGPT1, but inhibits ANGPT1-mediated signaling by competing for the same binding site. Signaling is also modulated by formation of heterodimers with TIE1, and by proteolytic processing that gives rise to a soluble TEK extracellular domain. The soluble extracellular domain modulates signaling by functioning as decoy receptor for angiopoietins. TEK phosphorylates DOK2, GRB7, GRB14, PIK3R1, SHC1 and TIE1. The chain is Angiopoietin-1 receptor (TEK) from Bos taurus (Bovine).